The chain runs to 301 residues: Light-independent protochlorophyllide reductase iron-sulfur ATP-binding protein (301 aa).

The segment covering 1–13 (MNVTLRPPLTTAP) has biased composition (low complexity). A disordered region spans residues 1-21 (MNVTLRPPLTTAPRRPDGAGS). Residues 45 to 50 (GIGKST) and Lys74 each bind ATP. Ser49 provides a ligand contact to Mg(2+). 2 residues coordinate [4Fe-4S] cluster: Cys130 and Cys164. ATP is bound by residues 215–216 (NR) and 239–241 (PDL).

This sequence belongs to the NifH/BchL/ChlL family. As to quaternary structure, homodimer. Protochlorophyllide reductase is composed of three subunits; BchL, BchN and BchB. [4Fe-4S] cluster is required as a cofactor.

It carries out the reaction chlorophyllide a + oxidized 2[4Fe-4S]-[ferredoxin] + 2 ADP + 2 phosphate = protochlorophyllide a + reduced 2[4Fe-4S]-[ferredoxin] + 2 ATP + 2 H2O. It functions in the pathway porphyrin-containing compound metabolism; bacteriochlorophyll biosynthesis (light-independent). Functionally, component of the dark-operative protochlorophyllide reductase (DPOR) that uses Mg-ATP and reduced ferredoxin to reduce ring D of protochlorophyllide (Pchlide) to form chlorophyllide a (Chlide). This reaction is light-independent. The L component serves as a unique electron donor to the NB-component of the complex, and binds Mg-ATP. The protein is Light-independent protochlorophyllide reductase iron-sulfur ATP-binding protein of Bradyrhizobium sp. (strain BTAi1 / ATCC BAA-1182).